The sequence spans 313 residues: Homoserine O-succinyltransferase (313 aa).

The Acyl-thioester intermediate role is filled by Cys-142. Substrate contacts are provided by Lys-163 and Ser-192. His-235 acts as the Proton acceptor in catalysis. Residue Glu-237 is part of the active site. Residue Arg-249 participates in substrate binding.

This sequence belongs to the MetA family.

It localises to the cytoplasm. The catalysed reaction is L-homoserine + succinyl-CoA = O-succinyl-L-homoserine + CoA. The protein operates within amino-acid biosynthesis; L-methionine biosynthesis via de novo pathway; O-succinyl-L-homoserine from L-homoserine: step 1/1. Functionally, transfers a succinyl group from succinyl-CoA to L-homoserine, forming succinyl-L-homoserine. This is Homoserine O-succinyltransferase from Vibrio parahaemolyticus serotype O3:K6 (strain RIMD 2210633).